The sequence spans 209 residues: Lectin (209 aa).

As to quaternary structure, homodimer; non-covalently linked.

In terms of biological role, binds chito-oligosaccherides. Has hemagglutinating activity towards rabbit erythrocytes. The chain is Lectin from Luffa acutangula (Ridged gourd).